Consider the following 118-residue polypeptide: MAFKSDVIFEEIKERIATDKEMVKKVGTSFRMTIAGADGKTKVWTIDAKSDTPYVGDDSSRPVEIEINIKDSDFIAIAAGKMKPDQAFMQGKMKLKGNIAKAMKLRTILDPKMLKAKL.

An SCP2 domain is found at 5–113 (SDVIFEEIKE…KLRTILDPKM (109 aa)).

The chain is Non-specific lipid-transfer protein-like 1 (nlt-1) from Caenorhabditis elegans.